The sequence spans 61 residues: Peroxidase 1 (61 aa).

Residues aspartate 1–arginine 32 form a disordered region. An N-linked (GlcNAc...) asparagine glycan is attached at asparagine 12. Aspartate 29, serine 31, and aspartate 36 together coordinate Ca(2+).

The protein belongs to the peroxidase family. Classical plant (class III) peroxidase subfamily. Requires Ca(2+) as cofactor. The cofactor is heme b.

The protein localises to the secreted. The catalysed reaction is 2 a phenolic donor + H2O2 = 2 a phenolic radical donor + 2 H2O. Functionally, removal of H(2)O(2), oxidation of toxic reductants, biosynthesis and degradation of lignin, suberization, auxin catabolism, response to environmental stresses such as wounding, pathogen attack and oxidative stress. These functions might be dependent on each isozyme/isoform in each plant tissue. The polypeptide is Peroxidase 1 (Vitis rotundifolia (Muscadine grape)).